Here is a 195-residue protein sequence, read N- to C-terminus: Transcriptional regulator GfcR (195 aa).

This sequence belongs to the purine/pyrimidine phosphoribosyltransferase family. GfcR subfamily.

The chain is Transcriptional regulator GfcR from Archaeoglobus fulgidus (strain ATCC 49558 / DSM 4304 / JCM 9628 / NBRC 100126 / VC-16).